The primary structure comprises 265 residues: Palmitoyltransferase ZDHHC21 (265 aa).

Residues 1 to 16 are Cytoplasmic-facing; sequence MGLRIHFVVDPHGWCC. A helical transmembrane segment spans residues 17–37; it reads MGLIVFVWLYNIVLIPKIVLF. The Extracellular portion of the chain corresponds to 38 to 44; it reads PHYEEGH. The chain crosses the membrane as a helical span at residues 45–65; that stretch reads IPGILIIIFYGISIFCLVALV. The Cytoplasmic segment spans residues 66–133; sequence RASITDPGRL…NNCVGEDNHW (68 aa). Residues 90–140 form the DHHC domain; that stretch reads ELCNKCNLMRPKRSHHCSRCGHCVRRMDHHCPWINNCVGEDNHWLFLQLCF. C120 acts as the S-palmitoyl cysteine intermediate in catalysis. A helical membrane pass occupies residues 134 to 154; the sequence is LFLQLCFYTELLTCYALMFSF. At 155–185 the chain is on the extracellular side; that stretch reads CHYYYFLPLKKRNLDLFVFRHELAIMRLAAF. The chain crosses the membrane as a helical span at residues 186-206; that stretch reads MGITMLVGITGLFYTQLIGII. Topologically, residues 207–265 are cytoplasmic; sequence TDTTSIEKMSNCCEDISRPRKPWQQTFSEVFGTRWKILWFIPFRQRQPLRVPYHFANHV.

Belongs to the DHHC palmitoyltransferase family. In terms of tissue distribution, widely expressed.

It is found in the golgi apparatus membrane. It localises to the golgi apparatus. Its subcellular location is the cis-Golgi network membrane. The protein resides in the cell membrane. It carries out the reaction L-cysteinyl-[protein] + hexadecanoyl-CoA = S-hexadecanoyl-L-cysteinyl-[protein] + CoA. Its function is as follows. Palmitoyltransferase that catalyzes the addition of palmitate onto various protein substrates. Palmitoylates sex steroid hormone receptors, including ESR1, PGR and AR, thereby regulating their targeting to the plasma membrane. This affects rapid intracellular signaling by sex hormones via ERK and AKT kinases and the generation of cAMP, but does not affect that mediated by their nuclear receptor. Palmitoylates FYN, regulates its localization in hair follicles and plays a key role in epidermal homeostasis and hair follicle differentiation. Through the palmitoylation of PLCB1 and the regulation of PLCB1 downstream signaling may indirectly regulate the function of the endothelial barrier and the adhesion of leukocytes to the endothelium. Also has a palmitoyltransferase activity toward ADRA1D, positively regulating its activity and expression and may thereby play a role in vascular contraction. May also palmitoylate eNOS and LCK. This chain is Palmitoyltransferase ZDHHC21, found in Homo sapiens (Human).